Reading from the N-terminus, the 211-residue chain is Histidine biosynthesis bifunctional protein HisIE (211 aa).

Residues 1–117 (MSTQTNTKSD…CWLDGNAHPF (117 aa)) form a phosphoribosyl-AMP cyclohydrolase region. A phosphoribosyl-ATP pyrophosphohydrolase region spans residues 118–211 (LNNLAELIAS…LARHQKAQRK (94 aa)).

In the N-terminal section; belongs to the PRA-CH family. The protein in the C-terminal section; belongs to the PRA-PH family.

It localises to the cytoplasm. The catalysed reaction is 1-(5-phospho-beta-D-ribosyl)-ATP + H2O = 1-(5-phospho-beta-D-ribosyl)-5'-AMP + diphosphate + H(+). The enzyme catalyses 1-(5-phospho-beta-D-ribosyl)-5'-AMP + H2O = 1-(5-phospho-beta-D-ribosyl)-5-[(5-phospho-beta-D-ribosylamino)methylideneamino]imidazole-4-carboxamide. It participates in amino-acid biosynthesis; L-histidine biosynthesis; L-histidine from 5-phospho-alpha-D-ribose 1-diphosphate: step 2/9. It functions in the pathway amino-acid biosynthesis; L-histidine biosynthesis; L-histidine from 5-phospho-alpha-D-ribose 1-diphosphate: step 3/9. The protein is Histidine biosynthesis bifunctional protein HisIE of Shewanella oneidensis (strain ATCC 700550 / JCM 31522 / CIP 106686 / LMG 19005 / NCIMB 14063 / MR-1).